Reading from the N-terminus, the 527-residue chain is MSSDIPCCGTTFSLYVVIIIALVAFAGLMAGLTLGLMSLGLVDLEVLIKSGRPQDRINAGKIFPVVKNQHLLLCTLLIGNSMAMEALPIFLDKIVPPWLAILLSVTLILVFGEIMPQAVCTRYGLKVGAIMAPFVRVLLVLFFPISYPISKVLDWMLGKGHGVLLRRAELKTFVNFHGNEAGKGGDLTTDETSIITGALELTEKTAKDAMTPISNAFSLELDTPLNLETLNTIMSVGHSRVPVYFRNPTHIIGLILVKNLLAVDARKEVPLRKMSMRKIPRVSETMPLYDILNEFQKGHSHIAVVYKDLDEQEQSPETSENGIERRKNKKTKDELFKDSCRKPKAQFEVSEKEVFKIETGDAKSGKSENGEEQQGSGKTSLLAAPAKKRHRGCSFCILDIENTPIPDFPTNEEVVGVITMEDVIEELLQEEILDETDEYVNIHNRIRVNMHASPENLPSVITSITQSSSGSTSPNQTSHMATPDSSPTTKPSNSSPTRKPSVSSPTREPSDSSHSMAPKHEESTQTL.

Topologically, residues Met1 to Tyr15 are extracellular. One can recognise a CNNM transmembrane domain in the interval Cys8–Glu191. The helical transmembrane segment at Val16–Leu36 threads the bilayer. The Cytoplasmic segment spans residues Met37 to His70. Residues Leu71 to Leu91 traverse the membrane as a helical segment. Residues Asp92 to Lys93 lie on the Extracellular side of the membrane. A helical membrane pass occupies residues Ile94–Ile114. The Cytoplasmic segment spans residues Met115–Lys126. A helical transmembrane segment spans residues Val127 to Tyr147. The Extracellular portion of the chain corresponds to Pro148–Leu527. 3 CBS domains span residues Met210–Leu271, Met274–Glu334, and Lys366–Glu435. Disordered stretches follow at residues Lys307 to Leu335, Glu358 to Ala384, and Ile464 to Leu527. Ser315 carries the post-translational modification Phosphoserine. The span at Glu358–Asn369 shows a compositional bias: basic and acidic residues. Low complexity predominate over residues Ile464–Ser501. An N-linked (GlcNAc...) asparagine glycan is attached at Asn475. Residues Val502–Ser515 show a composition bias toward polar residues. Residues Pro518–Leu527 show a composition bias toward basic and acidic residues.

It localises to the membrane. This is DUF21 domain-containing protein At1g47330 (CBSDUF7) from Arabidopsis thaliana (Mouse-ear cress).